The following is a 214-amino-acid chain: Pyrophosphatase PpaX (214 aa).

Asp9 (nucleophile) is an active-site residue.

It belongs to the HAD-like hydrolase superfamily. PpaX family. The cofactor is Mg(2+).

The enzyme catalyses diphosphate + H2O = 2 phosphate + H(+). Its function is as follows. Hydrolyzes pyrophosphate formed during P-Ser-HPr dephosphorylation by HPrK/P. Might play a role in controlling the intracellular pyrophosphate pool. The sequence is that of Pyrophosphatase PpaX from Oceanobacillus iheyensis (strain DSM 14371 / CIP 107618 / JCM 11309 / KCTC 3954 / HTE831).